We begin with the raw amino-acid sequence, 330 residues long: 5'-AMP-activated protein kinase subunit gamma-1 (330 aa).

The segment at 1–24 (MEAVPSSDSYPAVENEHLQETPES) is disordered. CBS domains lie at 43-103 (PTSS…KSAL), 125-187 (SFKP…PKPE), and 198-260 (IGTY…NLDV). ADP-binding positions include arginine 70, 85–90 (MLTITD), valine 130, 151–152 (HR), and lysine 170. Residues arginine 70, 85-90 (MLTITD), valine 130, histidine 151, 151-152 (HR), lysine 170, threonine 200, alanine 205, 226-227 (SA), and 242-245 (SKFD) contribute to the AMP site. ATP-binding positions include arginine 70, 85–90 (MLTITD), valine 130, 151–152 (HR), arginine 152, and lysine 170. An AMPK pseudosubstrate motif is present at residues 138-159 (LFDAVSSLIRNKIHRLPVIDPE). Residue 242–245 (SKFD) participates in ADP binding. 242 to 245 (SKFD) contributes to the ATP binding site. The residue at position 261 (serine 261) is a Phosphoserine; by ULK1. Threonine 263 is subject to Phosphothreonine; by ULK1. An ADP-binding site is contributed by arginine 269. Arginine 269 provides a ligand contact to AMP. ATP is bound at residue arginine 269. Phosphoserine; by ULK1 is present on serine 270. The CBS 4 domain maps to 272–329 (YFEGVLKCYLHETLETIINRLVEAEVHRLVVVDENDVVKGIVSLSDILQALVLTGGEK). Residues leucine 277 and 298-299 (HR) each bind ADP. AMP-binding positions include leucine 277, histidine 298, 298–299 (HR), and 314–317 (SLSD). ATP contacts are provided by residues leucine 277 and 298-299 (HR).

Belongs to the 5'-AMP-activated protein kinase gamma subunit family. In terms of assembly, AMPK is a heterotrimer of an alpha catalytic subunit (PRKAA1 or PRKAA2), a beta (PRKAB1 or PRKAB2) and a gamma non-catalytic subunits (PRKAG1, PRKAG2 or PRKAG3). Interacts with FNIP1 and FNIP2. In terms of processing, phosphorylated by ULK1 and ULK2; leading to negatively regulate AMPK activity and suggesting the existence of a regulatory feedback loop between ULK1, ULK2 and AMPK. Post-translationally, glycosylated; O-GlcNAcylated by OGT, promoting the AMP-activated protein kinase (AMPK) activity.

In terms of biological role, AMP/ATP-binding subunit of AMP-activated protein kinase (AMPK), an energy sensor protein kinase that plays a key role in regulating cellular energy metabolism. In response to reduction of intracellular ATP levels, AMPK activates energy-producing pathways and inhibits energy-consuming processes: inhibits protein, carbohydrate and lipid biosynthesis, as well as cell growth and proliferation. AMPK acts via direct phosphorylation of metabolic enzymes, and by longer-term effects via phosphorylation of transcription regulators. Also acts as a regulator of cellular polarity by remodeling the actin cytoskeleton; probably by indirectly activating myosin. Gamma non-catalytic subunit mediates binding to AMP, ADP and ATP, leading to activate or inhibit AMPK: AMP-binding results in allosteric activation of alpha catalytic subunit (PRKAA1 or PRKAA2) both by inducing phosphorylation and preventing dephosphorylation of catalytic subunits. ADP also stimulates phosphorylation, without stimulating already phosphorylated catalytic subunit. ATP promotes dephosphorylation of catalytic subunit, rendering the AMPK enzyme inactive. This is 5'-AMP-activated protein kinase subunit gamma-1 (PRKAG1) from Bos taurus (Bovine).